The sequence spans 274 residues: Large ribosomal subunit protein uL2cz/uL2cy (274 aa).

2 disordered regions span residues 1-23 (MAIH…SQVK) and 224-274 (NPVD…RRSK).

It belongs to the universal ribosomal protein uL2 family. Part of the 50S ribosomal subunit.

The protein localises to the plastid. The protein resides in the chloroplast. The sequence is that of Large ribosomal subunit protein uL2cz/uL2cy (rpl2-A) from Vitis vinifera (Grape).